The sequence spans 87 residues: UPF0335 protein RHECIAT_CH0003797 (87 aa).

This sequence belongs to the UPF0335 family.

The sequence is that of UPF0335 protein RHECIAT_CH0003797 from Rhizobium etli (strain CIAT 652).